Here is a 712-residue protein sequence, read N- to C-terminus: Satratoxin biosynthesis SC3 cluster transcription factor SAT20 (712 aa).

Composition is skewed to polar residues over residues 1-10, 25-36, 131-145, and 269-282; these read MPNLPGSSDS, CSSTKPNAAQEN, SEPSVHSTDNPWPSL, and SLPSNPPTALSSTG. Disordered regions lie at residues 1–43, 115–145, and 264–294; these read MPNL…ELAQ, SQNAFGQGSFDPFVPSSEPSVHSTDNPWPSL, and PVSGASLPSNPPTALSSTGTRKRKRFNKADR. The segment at residues 306 to 339 is a DNA-binding region (zn(2)-C6 fungal-type); sequence CFRCRMYKENCDPGLPCKNCMRVQVTRRTFFGPC. The stretch at 530–560 forms a coiled coil; it reads QIQIMVAQVMLDKQKNALKRLQERALSKNRH.

It is found in the nucleus. Its function is as follows. Transcriptional regulator that may regulate the expression of the satratoxin biosynthesis SC3 cluster, one of the 3 clusters involved in the biosynthesis of satratoxins, trichothecene mycotoxins that are associated with human food poisonings. This is Satratoxin biosynthesis SC3 cluster transcription factor SAT20 from Stachybotrys chartarum (strain CBS 109288 / IBT 7711) (Toxic black mold).